We begin with the raw amino-acid sequence, 215 residues long: Kinetochore protein Spc25 (215 aa).

A coiled-coil region spans residues 43-114 (DNLLTAMEKA…MECIHALKRA (72 aa)).

This sequence belongs to the SPC25 family. As to quaternary structure, component of the Ndc80 complex, which is composed of Ndc80, Nuf2 and Spc25.

Its subcellular location is the nucleus. The protein localises to the chromosome. It is found in the centromere. It localises to the kinetochore. Its function is as follows. Acts as a component of the essential kinetochore-associated Ndc80 complex, which is required for chromosome segregation and spindle checkpoint activity during meiosis and mitosis. Required for kinetochore integrity and the organization of stable microtubule binding sites in the outer plate of the kinetochore. Participates in SAC signaling that responds specifically to disruptions in spindle microtubule dynamics. The NDC80 complex synergistically enhances the affinity of the SKA1 complex for microtubules and may allow the NDC80 complex to track depolymerizing microtubules. The polypeptide is Kinetochore protein Spc25 (Drosophila ananassae (Fruit fly)).